The primary structure comprises 407 residues: MLIRNPFKDKYYSHDRRALNMLALRVPGLAFILMIYIASIVLQFVSGGWSILLLYAFTILIAIFALLHWHSYRWVKKRVILYFAVQGLITFALANLMTGFFILVIIGLYAFLIGQIIGMADRRRTFLILYLLLLLVINSAYHLHKGEVLHFIVIAAPIMIVIITYAATFFAQVDEKIKAQLTLERLELAHQQVEQLTLQNERQRMARDLHDTLAQGLVSLNMQLDAIHVHLAKGNTERAKEIIQQSMKRVKSTIADARSAIDDLRSKSEEIGVLKERITSLMDHFIESTGMACLLDYRLHQVLDVRTAENCYYIIGECMTNAAKHAEAKTIWISIWDDEKGRLHLTVKDNGKGFDVEKGKKKRGHYGLLGIQERVRAINGQFNIKSTKLKGTQIEITVPIQGEMQDE.

Residues 1 to 25 (MLIRNPFKDKYYSHDRRALNMLALR) lie on the Cytoplasmic side of the membrane. A run of 2 helical transmembrane segments spans residues 26–46 (VPGL…QFVS) and 47–67 (GGWS…FALL). The Cytoplasmic portion of the chain corresponds to 68 to 78 (HWHSYRWVKKR). Helical transmembrane passes span 79–99 (VILY…LMTG) and 100–120 (FFIL…IGMA). At 121 to 125 (DRRRT) the chain is on the cytoplasmic side. Residues 126–146 (FLILYLLLLLVINSAYHLHKG) form a helical membrane-spanning segment. Residues 147-150 (EVLH) are Extracellular-facing. Residues 151 to 171 (FIVIAAPIMIVIITYAATFFA) form a helical membrane-spanning segment. The Cytoplasmic segment spans residues 172–407 (QVDEKIKAQL…VPIQGEMQDE (236 aa)). In terms of domain architecture, Histidine kinase spans 201 to 402 (ERQRMARDLH…QIEITVPIQG (202 aa)). Phosphohistidine; by autocatalysis is present on histidine 210.

Its subcellular location is the cell membrane. The catalysed reaction is ATP + protein L-histidine = ADP + protein N-phospho-L-histidine.. Member of the two-component regulatory system YdfH/YdfI. May activate YdfI by phosphorylation. This is Sensor histidine kinase YdfH (ydfH) from Bacillus subtilis (strain 168).